A 100-amino-acid polypeptide reads, in one-letter code: MDNLSNYLIVSAVLFSIGTIGVLTRKNAIVVFMCIELMLNAVNLTFVAFSRHLGNLDGQIFVFFIMTVAAAEAAVGLALFIAFFNNRESIDIDDANLMKW.

The next 3 helical transmembrane spans lie at 4-24 (LSNY…GVLT), 29-49 (IVVF…FVAF), and 60-80 (IFVF…LALF).

It belongs to the complex I subunit 4L family. As to quaternary structure, NDH-1 is composed of 14 different subunits. Subunits NuoA, H, J, K, L, M, N constitute the membrane sector of the complex.

Its subcellular location is the cell inner membrane. It catalyses the reaction a quinone + NADH + 5 H(+)(in) = a quinol + NAD(+) + 4 H(+)(out). NDH-1 shuttles electrons from NADH, via FMN and iron-sulfur (Fe-S) centers, to quinones in the respiratory chain. The immediate electron acceptor for the enzyme in this species is believed to be ubiquinone. Couples the redox reaction to proton translocation (for every two electrons transferred, four hydrogen ions are translocated across the cytoplasmic membrane), and thus conserves the redox energy in a proton gradient. The sequence is that of NADH-quinone oxidoreductase subunit K from Trichlorobacter lovleyi (strain ATCC BAA-1151 / DSM 17278 / SZ) (Geobacter lovleyi).